Here is a 622-residue protein sequence, read N- to C-terminus: Chaperone protein HscA homolog (622 aa).

The protein belongs to the heat shock protein 70 family.

In terms of biological role, chaperone involved in the maturation of iron-sulfur cluster-containing proteins. Has a low intrinsic ATPase activity which is markedly stimulated by HscB. This chain is Chaperone protein HscA homolog, found in Delftia acidovorans (strain DSM 14801 / SPH-1).